Consider the following 463-residue polypeptide: Cysteine--tRNA ligase (463 aa).

Zn(2+) is bound at residue Cys28. Residues 30 to 40 (ITPYDLCHIGH) carry the 'HIGH' region motif. 3 residues coordinate Zn(2+): Cys211, His236, and Glu240. Positions 268 to 272 (KMSKS) match the 'KMSKS' region motif. Lys271 contributes to the ATP binding site.

It belongs to the class-I aminoacyl-tRNA synthetase family. As to quaternary structure, monomer. The cofactor is Zn(2+).

It localises to the cytoplasm. The enzyme catalyses tRNA(Cys) + L-cysteine + ATP = L-cysteinyl-tRNA(Cys) + AMP + diphosphate. The protein is Cysteine--tRNA ligase of Wigglesworthia glossinidia brevipalpis.